Consider the following 304-residue polypeptide: Coenzyme PQQ synthesis protein B (304 aa).

This sequence belongs to the PqqB family.

It participates in cofactor biosynthesis; pyrroloquinoline quinone biosynthesis. May be involved in the transport of PQQ or its precursor to the periplasm. This Pseudomonas aeruginosa (strain ATCC 15692 / DSM 22644 / CIP 104116 / JCM 14847 / LMG 12228 / 1C / PRS 101 / PAO1) protein is Coenzyme PQQ synthesis protein B.